The sequence spans 223 residues: Receptor-transporting protein 2 (223 aa).

The Cytoplasmic segment spans residues 1-193; that stretch reads MSTSLTTCEW…KKGQAGFISS (193 aa). The segment at 52-161 adopts a 3CxxC-type zinc-finger fold; sequence ASGRFHCSWC…SEFCEACQEG (110 aa). The helical transmembrane segment at 194–216 threads the bilayer; the sequence is FFSFRWCLFWGTLCLVIVYLQFF. Topologically, residues 217 to 223 are extracellular; that stretch reads RGRSGFL.

Belongs to the TMEM7 family. In terms of assembly, interacts with olfactory receptors. In terms of tissue distribution, predominantly expressed in olfactory and vomeronasal organs, in mature olfactory sensory neurons.

It localises to the cell membrane. Functionally, specifically promotes functional cell surface expression of olfactory receptors, but not of other GPCRs. The protein is Receptor-transporting protein 2 (Rtp2) of Mus musculus (Mouse).